Here is a 211-residue protein sequence, read N- to C-terminus: Thiamine-phosphate synthase (211 aa).

4-amino-2-methyl-5-(diphosphooxymethyl)pyrimidine contacts are provided by residues 37–41 (QLRIK) and N69. The Mg(2+) site is built by D70 and D89. S108 serves as a coordination point for 4-amino-2-methyl-5-(diphosphooxymethyl)pyrimidine. 134 to 136 (TQT) contributes to the 2-[(2R,5Z)-2-carboxy-4-methylthiazol-5(2H)-ylidene]ethyl phosphate binding site. K137 lines the 4-amino-2-methyl-5-(diphosphooxymethyl)pyrimidine pocket. 2-[(2R,5Z)-2-carboxy-4-methylthiazol-5(2H)-ylidene]ethyl phosphate-binding positions include G166 and 186–187 (VS).

Belongs to the thiamine-phosphate synthase family. Mg(2+) serves as cofactor.

The catalysed reaction is 2-[(2R,5Z)-2-carboxy-4-methylthiazol-5(2H)-ylidene]ethyl phosphate + 4-amino-2-methyl-5-(diphosphooxymethyl)pyrimidine + 2 H(+) = thiamine phosphate + CO2 + diphosphate. It catalyses the reaction 2-(2-carboxy-4-methylthiazol-5-yl)ethyl phosphate + 4-amino-2-methyl-5-(diphosphooxymethyl)pyrimidine + 2 H(+) = thiamine phosphate + CO2 + diphosphate. The enzyme catalyses 4-methyl-5-(2-phosphooxyethyl)-thiazole + 4-amino-2-methyl-5-(diphosphooxymethyl)pyrimidine + H(+) = thiamine phosphate + diphosphate. It participates in cofactor biosynthesis; thiamine diphosphate biosynthesis; thiamine phosphate from 4-amino-2-methyl-5-diphosphomethylpyrimidine and 4-methyl-5-(2-phosphoethyl)-thiazole: step 1/1. Condenses 4-methyl-5-(beta-hydroxyethyl)thiazole monophosphate (THZ-P) and 2-methyl-4-amino-5-hydroxymethyl pyrimidine pyrophosphate (HMP-PP) to form thiamine monophosphate (TMP). In Salmonella dublin (strain CT_02021853), this protein is Thiamine-phosphate synthase.